The chain runs to 370 residues: Cysteine-type anaerobic sulfatase-maturating enzyme (370 aa).

One can recognise a Radical SAM core domain in the interval 1-227 (MPPLSLLIKP…LKNLFDLWYE (227 aa)). Residues Cys-15 and Cys-19 each contribute to the [4Fe-4S] cluster site. Tyr-21 lines the S-adenosyl-L-methionine pocket. Residue Cys-22 coordinates [4Fe-4S] cluster. Gly-66, Ser-122, Arg-134, and Leu-195 together coordinate S-adenosyl-L-methionine. Residues Cys-255, Cys-261, and Cys-276 each contribute to the [4Fe-4S] cluster site. Catalysis depends on Asp-277, which acts as the Proton acceptor. [4Fe-4S] cluster-binding residues include Cys-317, Cys-320, Cys-326, Cys-330, and Cys-348.

The protein belongs to the radical SAM superfamily. Anaerobic sulfatase-maturating enzyme family. [4Fe-4S] cluster serves as cofactor.

It catalyses the reaction L-cysteinyl-[sulfatase] + S-adenosyl-L-methionine + H2O = 3-oxo-L-alanyl-[sulfatase] + hydrogen sulfide + 5'-deoxyadenosine + L-methionine + 2 H(+). The protein operates within protein modification; sulfatase oxidation. Involved in 'Cys-type' sulfatase maturation under anaerobic conditions. Catalyzes the post-translational modification of cysteine into 3-oxoalanine (also known as C(alpha)-formylglycine (FGly)), by a free radical chemical mechanism initiated via the reductive cleavage of S-adenosyl-L-methionine (SAM). In Clostridium perfringens (strain 13 / Type A), this protein is Cysteine-type anaerobic sulfatase-maturating enzyme.